The chain runs to 66 residues: Phylloseptin-S1 (66 aa).

A signal peptide spans 1 to 22 (MAFLKKSLFLVLFLGLVSLSIC). A propeptide spanning residues 23–46 (EEEKRETEEEEHDQEEDDKSEEKR) is cleaved from the precursor. Residues 25–44 (EKRETEEEEHDQEEDDKSEE) form a disordered region. A compositionally biased stretch (acidic residues) spans 30–41 (EEEEHDQEEDDK). Phe-65 carries the post-translational modification Phenylalanine amide.

As to expression, expressed by the skin glands.

It is found in the secreted. The protein localises to the target cell membrane. Functionally, antimicrobial peptide with high activity against Gram-positive bacteria, low activity against Gram-negative bacteria, and moderate activity against fungi. Acts on bacterial biofilms (S.aureus) with the same potency than on bacteria. Acts by causing bacterial membrane disruption inducing leakage of the intracellular content followed by cell death. It adopts an alpha-helical amphipathic structure in membrane environments. Also shows highly potent antiparasitic activity against Leishmania species. Shows low hemolytic activity on horse and human erythrocytes (LC(50)=39 uM). Is also active on human monocytes (IC(50)=23 uM). The polypeptide is Phylloseptin-S1 (Phyllomedusa sauvagei (Sauvage's leaf frog)).